The following is a 309-amino-acid chain: Olfactory receptor 1L8 (309 aa).

Residues 1–26 (MERINHTSSVSEFILLGLSSRPEDQK) are Extracellular-facing. N-linked (GlcNAc...) asparagine glycosylation occurs at N5. Residues 27 to 50 (TLFVLFLIVYLVTITGNLLIILAI) form a helical membrane-spanning segment. The Cytoplasmic portion of the chain corresponds to 51 to 58 (RFNPHLQT). The chain crosses the membrane as a helical span at residues 59–80 (PMYFFLSFLSLTDICFTTSVVP). The Extracellular portion of the chain corresponds to 81–101 (KMLMNFLSEKKTISYAGCLTQ). C98 and C190 are disulfide-bonded. A helical membrane pass occupies residues 102–121 (MYFLYALGNSDSCLLAVMAF). Residues 122 to 140 (DRYVAVCDPFHYVTTMSHH) are Cytoplasmic-facing. A helical membrane pass occupies residues 141–159 (HCVLLVAFSCSFPHLHSLL). Residues 160-197 (HTLLLNRLTFCDSNVIHHFLCDLSPVLKLSCSSIFVNE) lie on the Extracellular side of the membrane. A helical transmembrane segment spans residues 198 to 220 (IVQMTEAPIVLVTRFLCIAFSYI). Residues 221–237 (RILTTVLKIPSTSGKRK) are Cytoplasmic-facing. Residues 238–260 (AFSTCGFYLTVVTLFYGSIFCVY) traverse the membrane as a helical segment. Topologically, residues 261-272 (LQPPSTYAVKDH) are extracellular. A helical transmembrane segment spans residues 273–292 (VATIVYTVLSSMLNPFIYSL). Over 293–309 (RNKDLKQGLRKLMSKRS) the chain is Cytoplasmic.

The protein belongs to the G-protein coupled receptor 1 family.

It is found in the cell membrane. Odorant receptor. The polypeptide is Olfactory receptor 1L8 (OR1L8) (Homo sapiens (Human)).